A 473-amino-acid chain; its full sequence is Microtubule-binding protein TANGLED (473 aa).

The tract at residues 1 to 132 (MVARTPQKQR…VTRDIVDAIA (132 aa)) is required for binding to TAN and location to the cortical division sites (CDS) during cytokinesis. 2 disordered regions span residues 131-218 (IAPK…ENSF) and 290-354 (ASKF…LSTA). Polar residues-rich tracts occupy residues 205–216 (ISPQVKGNNGEN) and 307–329 (PTRNGSNSVRKSPRGSRSPTRTV).

In terms of assembly, interacts with POK1. As to expression, strongly expressed in flower buds and root tips.

It localises to the nucleus. Its subcellular location is the nucleolus. It is found in the cytoplasm. The protein localises to the cytoskeleton. The protein resides in the phragmoplast. Functionally, is required for spatial control cell division during plant development. Through an association with microtubules, acts both for the positioning of cytoskeletal arrays that establish planes of cell division during prophase and for spatial guidance of expanding phragmoplasts toward preestablished cortical division sites (CDS) during cytokinesis. This is Microtubule-binding protein TANGLED (TAN) from Arabidopsis thaliana (Mouse-ear cress).